The following is a 267-amino-acid chain: Glutamate racemase (267 aa).

Residues 13–14 and 45–46 contribute to the substrate site; these read DS and YS. Cys77 serves as the catalytic Proton donor/acceptor. 78-79 is a binding site for substrate; that stretch reads NT. Residue Cys188 is the Proton donor/acceptor of the active site. 189 to 190 lines the substrate pocket; that stretch reads TH.

It belongs to the aspartate/glutamate racemases family.

The catalysed reaction is L-glutamate = D-glutamate. It functions in the pathway cell wall biogenesis; peptidoglycan biosynthesis. Its function is as follows. Provides the (R)-glutamate required for cell wall biosynthesis. The sequence is that of Glutamate racemase from Histophilus somni (strain 2336) (Haemophilus somnus).